Here is a 229-residue protein sequence, read N- to C-terminus: Leucyl/phenylalanyl-tRNA--protein transferase (229 aa).

It belongs to the L/F-transferase family.

It is found in the cytoplasm. The enzyme catalyses N-terminal L-lysyl-[protein] + L-leucyl-tRNA(Leu) = N-terminal L-leucyl-L-lysyl-[protein] + tRNA(Leu) + H(+). It catalyses the reaction N-terminal L-arginyl-[protein] + L-leucyl-tRNA(Leu) = N-terminal L-leucyl-L-arginyl-[protein] + tRNA(Leu) + H(+). The catalysed reaction is L-phenylalanyl-tRNA(Phe) + an N-terminal L-alpha-aminoacyl-[protein] = an N-terminal L-phenylalanyl-L-alpha-aminoacyl-[protein] + tRNA(Phe). Functions in the N-end rule pathway of protein degradation where it conjugates Leu, Phe and, less efficiently, Met from aminoacyl-tRNAs to the N-termini of proteins containing an N-terminal arginine or lysine. This is Leucyl/phenylalanyl-tRNA--protein transferase from Pseudomonas syringae pv. syringae (strain B728a).